A 172-amino-acid chain; its full sequence is Large ribosomal subunit protein uL10 (172 aa).

This sequence belongs to the universal ribosomal protein uL10 family. As to quaternary structure, part of the ribosomal stalk of the 50S ribosomal subunit. The N-terminus interacts with L11 and the large rRNA to form the base of the stalk. The C-terminus forms an elongated spine to which L12 dimers bind in a sequential fashion forming a multimeric L10(L12)X complex.

In terms of biological role, forms part of the ribosomal stalk, playing a central role in the interaction of the ribosome with GTP-bound translation factors. The protein is Large ribosomal subunit protein uL10 of Rhodopseudomonas palustris (strain TIE-1).